A 510-amino-acid polypeptide reads, in one-letter code: Bifunctional purine biosynthesis protein PurH (510 aa).

Positions 1-143 (MTKRALISVS…KNHSGVLVLV (143 aa)) constitute an MGS-like domain.

It belongs to the PurH family.

The enzyme catalyses (6R)-10-formyltetrahydrofolate + 5-amino-1-(5-phospho-beta-D-ribosyl)imidazole-4-carboxamide = 5-formamido-1-(5-phospho-D-ribosyl)imidazole-4-carboxamide + (6S)-5,6,7,8-tetrahydrofolate. The catalysed reaction is IMP + H2O = 5-formamido-1-(5-phospho-D-ribosyl)imidazole-4-carboxamide. It functions in the pathway purine metabolism; IMP biosynthesis via de novo pathway; 5-formamido-1-(5-phospho-D-ribosyl)imidazole-4-carboxamide from 5-amino-1-(5-phospho-D-ribosyl)imidazole-4-carboxamide (10-formyl THF route): step 1/1. The protein operates within purine metabolism; IMP biosynthesis via de novo pathway; IMP from 5-formamido-1-(5-phospho-D-ribosyl)imidazole-4-carboxamide: step 1/1. This is Bifunctional purine biosynthesis protein PurH from Deinococcus deserti (strain DSM 17065 / CIP 109153 / LMG 22923 / VCD115).